We begin with the raw amino-acid sequence, 498 residues long: Protein spinster homolog 3 (498 aa).

A run of 12 helical transmembrane segments spans residues 49–71 (IAVA…IAGV), 87–107 (GLLQ…FGYL), 114–134 (KLIM…SSFV), 148–168 (LVGT…GDLF), 175–195 (LMIS…YIIG), 207–227 (WALR…VFLI), 260–280 (FVWS…LAFW), 309–329 (YIFG…GTCI), 343–363 (LICA…IVLA), 373–393 (FIAI…DILL), 407–427 (LQIM…IGAI), and 451–471 (LLCP…SLYI).

It belongs to the major facilitator superfamily. Spinster (TC 2.A.1.49) family.

It is found in the membrane. Sphingolipid transporter. This is Protein spinster homolog 3 (spns3) from Danio rerio (Zebrafish).